The chain runs to 107 residues: UPF0122 protein BLi01817/BL02321 (107 aa).

Belongs to the UPF0122 family.

In terms of biological role, might take part in the signal recognition particle (SRP) pathway. This is inferred from the conservation of its genetic proximity to ftsY/ffh. May be a regulatory protein. This chain is UPF0122 protein BLi01817/BL02321, found in Bacillus licheniformis (strain ATCC 14580 / DSM 13 / JCM 2505 / CCUG 7422 / NBRC 12200 / NCIMB 9375 / NCTC 10341 / NRRL NRS-1264 / Gibson 46).